The chain runs to 118 residues: Ribonuclease P protein component (118 aa).

The protein belongs to the RnpA family. Consists of a catalytic RNA component (M1 or rnpB) and a protein subunit.

The enzyme catalyses Endonucleolytic cleavage of RNA, removing 5'-extranucleotides from tRNA precursor.. Functionally, RNaseP catalyzes the removal of the 5'-leader sequence from pre-tRNA to produce the mature 5'-terminus. It can also cleave other RNA substrates such as 4.5S RNA. The protein component plays an auxiliary but essential role in vivo by binding to the 5'-leader sequence and broadening the substrate specificity of the ribozyme. The protein is Ribonuclease P protein component of Vibrio vulnificus (strain CMCP6).